An 86-amino-acid polypeptide reads, in one-letter code: MPFIFVVSFAILACIVVDTANHKGRGRPAKCKLPPDDGPCRARIPSYYFDRKTKTCKEFMYGGCEGNENNFENITTCQEECRAKKV.

Positions 1–19 (MPFIFVVSFAILACIVVDT) are cleaved as a signal peptide. The 51-residue stretch at 31–81 (CKLPPDDGPCRARIPSYYFDRKTKTCKEFMYGGCEGNENNFENITTCQEEC) folds into the BPTI/Kunitz inhibitor domain. Cystine bridges form between Cys-31–Cys-81, Cys-40–Cys-64, and Cys-56–Cys-77. Asn-73 is a glycosylation site (N-linked (GlcNAc...) asparagine).

Salivary gland.

It localises to the secreted. Functionally, anticoagulant protein. Increases fibrinolysis time. Inhibits thrombin generation. Inhibits the generation of the active forms of host coagulation factor XII, factor XI and plasma kallikrein. This is Kunitz-type anticoagulant protein Ir-CPI from Ixodes ricinus (Common tick).